We begin with the raw amino-acid sequence, 57 residues long: Granulin-3 (57 aa).

Cystine bridges form between cysteine 4–cysteine 16 and cysteine 10–cysteine 26.

Belongs to the granulin family. Post-translationally, granulins are disulfide bridged. In terms of tissue distribution, ubiquitous.

The protein localises to the secreted. In terms of biological role, granulins have possible cytokine-like activity. They may play a role in inflammation, wound repair, and tissue remodeling. In Cyprinus carpio (Common carp), this protein is Granulin-3.